The sequence spans 132 residues: MDKKSFYGLGRRKSSTAKVYLYQSKDKGKITINHRNPSDYFPNKLVIQDMEQPLELTKLKDNFDINVVVKGGGFTGQAGAIRLGIVRALIKFNPDLKKLLKTKKLTTRDKRAKERKKFGLYGARRAPQFTKR.

This sequence belongs to the universal ribosomal protein uS9 family.

This is Small ribosomal subunit protein uS9 (rpsI) from Mycoplasma genitalium (strain ATCC 33530 / DSM 19775 / NCTC 10195 / G37) (Mycoplasmoides genitalium).